The sequence spans 431 residues: Gamma-glutamyl phosphate reductase (431 aa).

It belongs to the gamma-glutamyl phosphate reductase family.

It localises to the cytoplasm. The catalysed reaction is L-glutamate 5-semialdehyde + phosphate + NADP(+) = L-glutamyl 5-phosphate + NADPH + H(+). The protein operates within amino-acid biosynthesis; L-proline biosynthesis; L-glutamate 5-semialdehyde from L-glutamate: step 2/2. In terms of biological role, catalyzes the NADPH-dependent reduction of L-glutamate 5-phosphate into L-glutamate 5-semialdehyde and phosphate. The product spontaneously undergoes cyclization to form 1-pyrroline-5-carboxylate. This Trichodesmium erythraeum (strain IMS101) protein is Gamma-glutamyl phosphate reductase.